The primary structure comprises 397 residues: 3-ketoacyl-CoA thiolase, mitochondrial (397 aa).

The transit peptide at 1–16 (MALLRGVFVVAAKRTP) directs the protein to the mitochondrion; not cleaved. Lysine 25 carries the N6-acetyllysine; alternate modification. Lysine 25 is modified (N6-succinyllysine; alternate). Lysine 45 carries the post-translational modification N6-succinyllysine. Cysteine 92 functions as the Acyl-thioester intermediate in the catalytic mechanism. Threonine 119 carries the post-translational modification Phosphothreonine. A Phosphoserine modification is found at serine 121. Tyrosine 127 is modified (phosphotyrosine). At threonine 136 the chain carries Phosphothreonine. At lysine 137 the chain carries N6-acetyllysine; alternate. Position 137 is an N6-succinyllysine; alternate (lysine 137). Serine 140 is modified (phosphoserine). Lysine 143, lysine 171, lysine 191, and lysine 209 each carry N6-acetyllysine; alternate. Residues lysine 143, lysine 171, lysine 191, and lysine 209 each carry the N6-succinyllysine; alternate modification. An N6-succinyllysine mark is found at lysine 211, lysine 212, and lysine 214. Residues arginine 224 and threonine 227 each coordinate CoA. At lysine 234 the chain carries N6-acetyllysine; alternate. Lysine 234 carries the N6-succinyllysine; alternate modification. Lysine 240 bears the N6-succinyllysine mark. Residue lysine 241 is modified to N6-acetyllysine. Serine 251 serves as a coordination point for CoA. Lysine 269 and lysine 270 each carry N6-acetyllysine. Lysine 305 carries the N6-acetyllysine; alternate modification. Lysine 305 carries the post-translational modification N6-succinyllysine; alternate. Position 310 is a phosphoserine (serine 310). The residue at position 312 (lysine 312) is an N6-acetyllysine; alternate. Position 312 is an N6-succinyllysine; alternate (lysine 312). Residue serine 333 is modified to Phosphoserine. Lysine 340 and lysine 375 each carry N6-acetyllysine. Catalysis depends on cysteine 382, which acts as the Proton donor/acceptor.

This sequence belongs to the thiolase-like superfamily. Thiolase family. In terms of assembly, homotetramer. Interacts with BNIP3.

The protein localises to the mitochondrion. It carries out the reaction an acyl-CoA + acetyl-CoA = a 3-oxoacyl-CoA + CoA. The catalysed reaction is 2 acetyl-CoA = acetoacetyl-CoA + CoA. It catalyses the reaction acetyl-CoA + H2O = acetate + CoA + H(+). The enzyme catalyses propanoyl-CoA + H2O = propanoate + CoA + H(+). It carries out the reaction butanoyl-CoA + H2O = butanoate + CoA + H(+). The catalysed reaction is hexanoyl-CoA + H2O = hexanoate + CoA + H(+). It catalyses the reaction octanoyl-CoA + H2O = octanoate + CoA + H(+). The enzyme catalyses decanoyl-CoA + H2O = decanoate + CoA + H(+). It carries out the reaction dodecanoyl-CoA + H2O = dodecanoate + CoA + H(+). The catalysed reaction is tetradecanoyl-CoA + H2O = tetradecanoate + CoA + H(+). It catalyses the reaction hexadecanoyl-CoA + H2O = hexadecanoate + CoA + H(+). It functions in the pathway lipid metabolism; fatty acid beta-oxidation. In the production of energy from fats, this is one of the enzymes that catalyzes the last step of the mitochondrial beta-oxidation pathway, an aerobic process breaking down fatty acids into acetyl-CoA. Using free coenzyme A/CoA, catalyzes the thiolytic cleavage of medium- to long-chain unbranched 3-oxoacyl-CoAs into acetyl-CoA and a fatty acyl-CoA shortened by two carbon atoms. Also catalyzes the condensation of two acetyl-CoA molecules into acetoacetyl-CoA and could be involved in the production of ketone bodies. Also displays hydrolase activity on various fatty acyl-CoAs. Thereby, could be responsible for the production of acetate in a side reaction to beta-oxidation. Abolishes BNIP3-mediated apoptosis and mitochondrial damage. This is 3-ketoacyl-CoA thiolase, mitochondrial (ACAA2) from Pongo abelii (Sumatran orangutan).